The following is a 259-amino-acid chain: Phosphatidylinositol transfer protein 2 (259 aa).

Positions 231 to 259 (LTIEDIRKIEEETKAELAKKLEENKAANK) form a coiled coil.

Belongs to the PtdIns transfer protein family. PI transfer class IIA subfamily.

Its subcellular location is the cytoplasm. It localises to the golgi apparatus. Its function is as follows. Catalyzes the transfer of PtdIns and phosphatidylcholine between membranes. The chain is Phosphatidylinositol transfer protein 2 (pitB) from Dictyostelium discoideum (Social amoeba).